A 405-amino-acid polypeptide reads, in one-letter code: Phosphopentomutase (405 aa).

Mn(2+)-binding residues include D10, D303, H308, D344, H345, and H356.

Belongs to the phosphopentomutase family. The cofactor is Mn(2+).

The protein localises to the cytoplasm. The catalysed reaction is 2-deoxy-alpha-D-ribose 1-phosphate = 2-deoxy-D-ribose 5-phosphate. The enzyme catalyses alpha-D-ribose 1-phosphate = D-ribose 5-phosphate. The protein operates within carbohydrate degradation; 2-deoxy-D-ribose 1-phosphate degradation; D-glyceraldehyde 3-phosphate and acetaldehyde from 2-deoxy-alpha-D-ribose 1-phosphate: step 1/2. Isomerase that catalyzes the conversion of deoxy-ribose 1-phosphate (dRib-1-P) and ribose 1-phosphate (Rib-1-P) to deoxy-ribose 5-phosphate (dRib-5-P) and ribose 5-phosphate (Rib-5-P), respectively. This chain is Phosphopentomutase, found in Shewanella pealeana (strain ATCC 700345 / ANG-SQ1).